Here is a 398-residue protein sequence, read N- to C-terminus: 8-amino-7-oxononanoate synthase (398 aa).

Arginine 23 is a binding site for substrate. 110-111 (GY) provides a ligand contact to pyridoxal 5'-phosphate. Residue histidine 135 participates in substrate binding. Pyridoxal 5'-phosphate contacts are provided by serine 181, histidine 209, and threonine 238. Lysine 241 carries the N6-(pyridoxal phosphate)lysine modification. Threonine 355 is a binding site for substrate.

Belongs to the class-II pyridoxal-phosphate-dependent aminotransferase family. BioF subfamily. As to quaternary structure, homodimer. The cofactor is pyridoxal 5'-phosphate.

The catalysed reaction is 6-carboxyhexanoyl-[ACP] + L-alanine + H(+) = (8S)-8-amino-7-oxononanoate + holo-[ACP] + CO2. It participates in cofactor biosynthesis; biotin biosynthesis. Its function is as follows. Catalyzes the decarboxylative condensation of pimeloyl-[acyl-carrier protein] and L-alanine to produce 8-amino-7-oxononanoate (AON), [acyl-carrier protein], and carbon dioxide. The polypeptide is 8-amino-7-oxononanoate synthase (Cellvibrio japonicus (strain Ueda107) (Pseudomonas fluorescens subsp. cellulosa)).